The primary structure comprises 82 residues: Small ribosomal subunit protein bS16c (82 aa).

It belongs to the bacterial ribosomal protein bS16 family.

The protein localises to the plastid. Its subcellular location is the chloroplast. The chain is Small ribosomal subunit protein bS16c from Porphyra purpurea (Red seaweed).